The following is a 78-amino-acid chain: Calcium/calmodulin-dependent protein kinase II inhibitor 1 (78 aa).

The CAMK2 inhibitory domain stretch occupies residues 41 to 68 (NKRPPKLGQIGRSKRVVIEDDRIDDVLK).

The protein belongs to the CAMK2N family. Interacts with CAMK2B; the presence of Ca(2+)/calmodulin increases the interaction but is not essential. Interacts with CAMK2A; this interaction requires CAMK2A activation by Ca(2+).

It is found in the synapse. The protein resides in the cell projection. It localises to the dendrite. The protein localises to the postsynaptic density. Its function is as follows. Potent and specific inhibitor of CaM-kinase II (CAMK2). Plays a role in the maintenance of long-term retrieval-induced memory in response to contextual fear. Modulates blood pressure and vascular reactivity via regulation of CAMK2 activity in addition to regulation of left ventricular mass. Mediates the NLRP3 inflammasome in cardiomyocytes via acting as an inhibitor of the MAPK14/p38 and MAPK8/JNK pathways, thereby regulating ventricular remodeling and cardiac rhythm post-myocardial infarction. Negatively effects insulin sensitivity and promotes lipid formation in adipose tissues independent of CAMK2 signaling. This is Calcium/calmodulin-dependent protein kinase II inhibitor 1 (CAMK2N1) from Homo sapiens (Human).